The chain runs to 307 residues: Regulating synaptic membrane exocytosis protein 3 (307 aa).

The tract at residues 86 to 120 (STETGIAVEMRSRVTRQGSRESTDGSTNSNSSEGT) is disordered. Positions 109 to 119 (DGSTNSNSSEG) are enriched in polar residues. Residues 155 to 273 (PMGDVHIAIM…DLSAVVTGWY (119 aa)) enclose the C2 domain. Phosphoserine occurs at positions 294 and 297.

In terms of assembly, binds PPFIA3. Does not bind RAB3. In terms of tissue distribution, expressed exclusively in brain with significant levels in cortex, cerebellum and olfactory bulb. Detected at lower level in hippocampus.

It localises to the synapse. Regulates synaptic membrane exocytosis. The chain is Regulating synaptic membrane exocytosis protein 3 (Rims3) from Rattus norvegicus (Rat).